The primary structure comprises 952 residues: Eukaryotic initiation factor 4F subunit p150 (952 aa).

3 disordered regions span residues 1-77 (MTDE…NYNG), 115-389 (GSAP…DAGT), and 481-575 (VIPP…LVPS). Residues 7–16 (HPTQSASKQE) are compositionally biased toward polar residues. The segment covering 29–46 (ESQQQRGYTNYNNGSNYT) has biased composition (low complexity). Over residues 47-56 (QKKPYNSNRP) the composition is skewed to polar residues. A compositionally biased stretch (low complexity) spans 65 to 74 (GPNRYNNRGN). Basic and acidic residues predominate over residues 140-151 (SGEHLDLKEQHK). A compositionally biased stretch (polar residues) spans 154–166 (LQSQERSTVSPQP). Ser-163 carries the post-translational modification Phosphoserine. The span at 175–191 (DSTSTSTPTPTPSTNDS) shows a compositional bias: low complexity. At Thr-181 the chain carries Phosphothreonine. The tract at residues 188 to 299 (TNDSKASSEE…KEESTPKVLT (112 aa)) is interaction with PAB1. Phosphoserine is present on Ser-195. Residues 218 to 228 (AALEKKRKEQL) are compositionally biased toward basic and acidic residues. Residues 229 to 244 (EGSSGNNNIPMKTTPE) show a composition bias toward polar residues. 3 stretches are compositionally biased toward basic and acidic residues: residues 246–276 (VEEK…KQET), 283–294 (QGEKGQIKEEST), and 309–333 (QQKE…ETKS). A compositionally biased stretch (polar residues) spans 355 to 368 (TEQSNIDESATTPA). Position 503 is a phosphoserine (Ser-503). Composition is skewed to basic and acidic residues over residues 504 to 521 (RGHD…DRAN) and 532 to 569 (RMND…KEEV). Positions 607–850 (ERKMKSLLNK…IDIKELRHDK (244 aa)) constitute an MIF4G domain. The interval 870-952 (EEERQRQLKN…ALMGESDDEE (83 aa)) is disordered. Residues 879–894 (NNSRSNSRRTNNSSNR) are compositionally biased toward low complexity. Position 883 is a phosphoserine (Ser-883). Position 888 is a phosphothreonine (Thr-888). Residues Ser-892, Ser-896, Ser-908, and Ser-948 each carry the phosphoserine modification. Over residues 908–922 (SFITTRTYSQRNSQR) the composition is skewed to polar residues.

It belongs to the eukaryotic initiation factor 4G family. Component of the eIF4F complex, which composition varies with external and internal environmental conditions. It is composed of at least eIF4A (TIF1/TIF2), eIF4E (TIF45) and eIF4G (TIF4631 or TIF4632). Interacts with PAT1 in a RNA-dependent manner.

It localises to the cytoplasm. The protein resides in the P-body. Its subcellular location is the stress granule. Functionally, component of the eIF4F complex, which interacts with the mRNA cap structure and serves as an initial point of assembly for the translation apparatus. Stimulates translation by interaction with polyadenylate-binding protein PAB1, bringing the 5'- and 3'-ends of the mRNA in proximity. The formation of this circular mRNP structure appears to be critical for the synergistic effects of the cap and the poly(A) tail in facilitating translation initiation, recycling of ribosomes, and mRNA stability. TIF4631 is probably essential when TIF4632 is missing. The sequence is that of Eukaryotic initiation factor 4F subunit p150 from Saccharomyces cerevisiae (strain ATCC 204508 / S288c) (Baker's yeast).